The following is a 399-amino-acid chain: Elongation factor Tu (399 aa).

Residues 10-209 (KPHVNIGTIG…AVDEYIPEPT (200 aa)) form the tr-type G domain. The tract at residues 19 to 26 (GHVDHGKT) is G1. Residue 19–26 (GHVDHGKT) participates in GTP binding. Thr-26 provides a ligand contact to Mg(2+). The tract at residues 60–64 (GITIA) is G2. The G3 stretch occupies residues 81–84 (DCPG). GTP-binding positions include 81–85 (DCPGH) and 136–139 (NKED). Residues 136–139 (NKED) are G4. The tract at residues 174-176 (SAK) is G5.

This sequence belongs to the TRAFAC class translation factor GTPase superfamily. Classic translation factor GTPase family. EF-Tu/EF-1A subfamily. As to quaternary structure, monomer.

The protein resides in the cytoplasm. It carries out the reaction GTP + H2O = GDP + phosphate + H(+). In terms of biological role, GTP hydrolase that promotes the GTP-dependent binding of aminoacyl-tRNA to the A-site of ribosomes during protein biosynthesis. The sequence is that of Elongation factor Tu from Sulfurimonas denitrificans (strain ATCC 33889 / DSM 1251) (Thiomicrospira denitrificans (strain ATCC 33889 / DSM 1251)).